The sequence spans 655 residues: RalA-binding protein 1 (655 aa).

Residues 1-158 are disordered; the sequence is MTECFLPPTS…KKSKDLTAAD (158 aa). Residue Thr-2 is modified to N-acetylthreonine. Over residues 24 to 33 the composition is skewed to polar residues; it reads LTRTPSSEEI. Residues Ser-29, Ser-30, and Ser-34 each carry the phosphoserine modification. Thr-44 carries the post-translational modification Phosphothreonine. 2 positions are modified to phosphoserine: Ser-48 and Ser-62. Positions 52 to 68 are enriched in basic and acidic residues; that stretch reads DILHEPPDVVSDDEKDH. ATP is bound at residue 69–74; sequence GKKKGK. Residues 69 to 79 are compositionally biased toward basic residues; sequence GKKKGKFKKKE. Ser-92 and Ser-93 each carry phosphoserine. The segment covering 102 to 118 has biased composition (basic residues); it reads KMKRSKGIHVFKKPSFS. The segment at 102–119 is nuclear localization signal; sequence KMKRSKGIHVFKKPSFSK. Residues 119-155 show a composition bias toward basic and acidic residues; sequence KKKEKDFKIKEKPKEEKHKEEKHKEEKHKEKKSKDLT. Positions 154–219 are mediates association with membranes and could form transmembrane domains; the sequence is LTAADVVKQW…PAVFRECIDY (66 aa). Positions 192-380 constitute a Rho-GAP domain; it reads IPLADAVERT…VVLKQVMKPL (189 aa). Positions 403 to 499 are mediates interaction with RALA and RALB; the sequence is RRQEFLLNCL…LTEQEELLAM (97 aa). Residue 418–425 coordinates ATP; the sequence is GGIKDLSK. Ser-461 and Ser-463 each carry phosphoserine. The mediates interaction with REPS1 and REPS2 stretch occupies residues 500–655; it reads EQFLRRQIAS…PSRDRKETSI (156 aa). Disordered regions lie at residues 525 to 551 and 601 to 655; these read QSRQ…DEEE and AEQQ…ETSI. Positions 536–551 are enriched in acidic residues; sequence EEYSSESESESEDEEE. Residues 624–655 are compositionally biased toward basic and acidic residues; the sequence is GVLEPKAAKEQPKAGKEPAKPSPSRDRKETSI. At Ser-645 the chain carries Phosphoserine.

In terms of assembly, interacts with the GTP-bound form of RALA (via effector domain); during mitosis, recruits RALBP1 to the mitochondrion where it promotes DNM1L phosphorylation and mitochondrial fission. Interacts with DNM1L; mediates its mitotic kinase cyclin B-CDK1-mediated phosphorylation during mitosis to promote mitochondrial fission. Interacts with the mitotic kinase cyclin B-CDK1 during mitosis. Interacts with the GTP-bound form of RALB (via effector domain). Interacts with REPS1; the interaction is direct and does not affect RALA-binding nor GTPase activator activity of RALBP1. Interacts with REPS2; the interaction is direct and does not affect RALA-binding nor GTPase activator activity of RALBP1. Interacts with EPN1, NUMB and TFAP2A during interphase and mitosis. Interacts with AP2M1; as part of the AP2 complex. Interacts with CDC42. Interacts with RAC1. In terms of processing, tyrosine-phosphorylated upon stimulation of cells with EGF. May undergo proteolytic cleavage to give peptides which reassemble to form a transporter complex. As to expression, expressed ubiquitously but at low levels. Shows a strong expression in the erythrocytes.

It is found in the cell membrane. It localises to the cytoplasm. The protein resides in the cytosol. Its subcellular location is the cytoskeleton. The protein localises to the spindle pole. It is found in the nucleus. It localises to the mitochondrion. It carries out the reaction an S-substituted glutathione(in) + ATP + H2O = an S-substituted glutathione(out) + ADP + phosphate + H(+). The catalysed reaction is ATP + H2O + xenobioticSide 1 = ADP + phosphate + xenobioticSide 2.. It catalyses the reaction leukotriene C4(in) + ATP + H2O = leukotriene C4(out) + ADP + phosphate + H(+). Its function is as follows. Multifunctional protein that functions as a downstream effector of RALA and RALB. As a GTPase-activating protein/GAP can inactivate CDC42 and RAC1 by stimulating their GTPase activity. As part of the Ral signaling pathway, may also regulate ligand-dependent EGF and insulin receptors-mediated endocytosis. During mitosis, may act as a scaffold protein in the phosphorylation of EPSIN/EPN1 by the mitotic kinase cyclin B-CDK1, preventing endocytosis during that phase of the cell cycle. During mitosis, also controls mitochondrial fission as an effector of RALA. Recruited to mitochondrion by RALA, acts as a scaffold to foster the mitotic kinase cyclin B-CDK1-mediated phosphorylation and activation of DNM1L. Could also function as a primary ATP-dependent active transporter for glutathione conjugates of electrophiles. May also actively catalyze the efflux of a wide range of substrates including xenobiotics like doxorubicin (DOX) contributing to cell multidrug resistance. This is RalA-binding protein 1 from Homo sapiens (Human).